A 1583-amino-acid chain; its full sequence is Methyl-CpG-binding domain protein 5/6 homolog sba (1583 aa).

Residues 81-115 (AVHQQQQQHHHQQQQQQQHQQQQQILPAGLVNGNG) are disordered. Low complexity predominate over residues 83–104 (HQQQQQHHHQQQQQQQHQQQQQ). Residues 238-308 (RKTATSYNGN…YLFDFNAQVP (71 aa)) form the MBD domain. Disordered stretches follow at residues 427-457 (NKLP…PTSQ), 556-579 (EPIV…QQQL), 630-694 (VTLV…QTQV), 839-862 (AELH…AASS), 940-980 (PPAQ…ISPQ), 1179-1247 (VMSR…RSIC), and 1287-1339 (QESP…SFPL). Residues 430-439 (PATNRTATTP) are compositionally biased toward low complexity. Residues 440 to 449 (TPAPTPPPQH) are compositionally biased toward pro residues. The span at 563 to 579 (QQQQQQQQQQLQQQQQL) shows a compositional bias: low complexity. Residues 658–677 (AISTSHESPRQSLSSPTDSV) show a composition bias toward polar residues. Low complexity-rich tracts occupy residues 679–693 (SAKS…PQTQ) and 851–862 (VSQPSPVAAASS). 3 stretches are compositionally biased toward polar residues: residues 1179 to 1195 (VMSR…TTTC), 1216 to 1240 (CVSS…PSST), and 1287 to 1313 (QESP…TVRT). Over residues 1323–1333 (RGAARAAPSAS) the composition is skewed to low complexity. Residues 1346 to 1408 (IGELIWGPAR…VNSLQSLSEG (63 aa)) enclose the PWWP domain. Positions 1415–1446 (AQKDTRKSRKLNSQLERAIQEAMTELDNISAS) form a coiled coil. Residues 1471–1497 (IGGQQQYQQQQQQQQQQQSPSSTNNKI) form a disordered region. A compositionally biased stretch (low complexity) spans 1474-1488 (QQQYQQQQQQQQQQQ).

As to quaternary structure, component of the polycomb repressive deubiquitinase (PR-DUB) complex, at least composed of caly/calypso, Asx and sba (MDB5/6 homolog). Interacts (via MBD domain) with Asx (via PHD domain); the interaction is important for the stability of the PR-DUB complex.

Its function is as follows. Non-catalytic component of the polycomb repressive deubiquitinase (PR-DUB) complex, a complex that specifically mediates deubiquitination of histone H2A monoubiquitinated at 'Lys-119' (H2AK118ub1). Important for maintaining stability of the PR-DUB complex. Probable epigenetic regulator involved in developmental pattern formation and eye development. The sequence is that of Methyl-CpG-binding domain protein 5/6 homolog sba from Drosophila melanogaster (Fruit fly).